An 892-amino-acid polypeptide reads, in one-letter code: Integrator complex subunit 6 (892 aa).

The region spanning 3–227 is the VWFA domain; the sequence is ILLFLIDTSA…QCLESLVQKV (225 aa). An Inhibitory loop motif is present at residues 630–637; sequence MMIDEADE. Disordered stretches follow at residues 665 to 692, 711 to 754, and 771 to 793; these read MSPLLRRPQTPPIITNHVLGKGPTGTQG, VGGT…AAPD, and PDHTQNCEELSPPGQEGEMEVNE.

The protein belongs to the Integrator subunit 6 family. In terms of assembly, component of the Integrator complex, composed of core subunits INTS1, INTS2, INTS3, INTS4, INTS5, INTS6, INTS7, INTS8, INTS9/RC74, INTS10, INTS11/CPSF3L, INTS12, INTS13, INTS14 and INTS15. The core complex associates with protein phosphatase 2A subunits PPP2CA and PPP2R1A, to form the Integrator-PP2A (INTAC) complex.

It is found in the nucleus. It localises to the chromosome. In terms of biological role, component of the integrator complex, a multiprotein complex that terminates RNA polymerase II (Pol II) transcription in the promoter-proximal region of genes. The integrator complex provides a quality checkpoint during transcription elongation by driving premature transcription termination of transcripts that are unfavorably configured for transcriptional elongation: the complex terminates transcription by (1) catalyzing dephosphorylation of the C-terminal domain (CTD) of Pol II subunit POLR2A/RPB1 and SUPT5H/SPT5, (2) degrading the exiting nascent RNA transcript via endonuclease activity and (3) promoting the release of Pol II from bound DNA. The integrator complex is also involved in terminating the synthesis of non-coding Pol II transcripts, such as enhancer RNAs (eRNAs), small nuclear RNAs (snRNAs), telomerase RNAs and long non-coding RNAs (lncRNAs). Within the integrator complex, INTS6 acts as a molecular adapter that promotes assembly of protein phosphatase 2A (PP2A) subunits to the integrator core complex, promoting recruitment of PP2A to transcription pause-release checkpoint. This Danio rerio (Zebrafish) protein is Integrator complex subunit 6 (ints6l).